Consider the following 288-residue polypeptide: Peptidyl-tRNA hydrolase, chloroplastic (288 aa).

The N-terminal 55 residues, 1–55, are a transit peptide targeting the chloroplast; sequence MKAVAFPAKIANLSFPSNCCSLFFRSPATFLSPALPCRKLTKGIRGLEGLMSQCL. Tyrosine 107 serves as a coordination point for tRNA. Catalysis depends on histidine 112, which acts as the Proton acceptor. Residues phenylalanine 157, asparagine 159, and asparagine 205 each coordinate tRNA.

This sequence belongs to the PTH family. In terms of assembly, monomer.

The protein resides in the plastid. It is found in the chloroplast stroma. It catalyses the reaction an N-acyl-L-alpha-aminoacyl-tRNA + H2O = an N-acyl-L-amino acid + a tRNA + H(+). Its function is as follows. The natural substrate for this enzyme may be peptidyl-tRNAs which drop off the ribosome during protein synthesis. The polypeptide is Peptidyl-tRNA hydrolase, chloroplastic (Arabidopsis thaliana (Mouse-ear cress)).